The sequence spans 1109 residues: Pesticidal crystal protein Cry28Aa (1109 aa).

The protein belongs to the delta endotoxin family.

Promotes colloidosmotic lysis by binding to the midgut epithelial cells of insects. The protein is Pesticidal crystal protein Cry28Aa (cry28Aa) of Bacillus thuringiensis subsp. finitimus.